A 259-amino-acid chain; its full sequence is Bidirectional sugar transporter SWEET4 (259 aa).

The Extracellular portion of the chain corresponds to 1–10; that stretch reads MVSPDTIRTA. Residues 10-94 enclose the MtN3/slv 1 domain; that stretch reads AIGVVGNGTA…TYIALFLAFS (85 aa). The helical transmembrane segment at 11-31 threads the bilayer; sequence IGVVGNGTALVLFLSPVPTFI. Topologically, residues 32–44 are cytoplasmic; sequence RIWKKGSVEQYSA. A helical transmembrane segment spans residues 45–65; it reads VPYVATLLNCMMWVLYGLPAV. The Extracellular portion of the chain corresponds to 66–77; sequence HPHSMLVITING. N-linked (GlcNAc...) asparagine glycosylation occurs at N76. The chain crosses the membrane as a helical span at residues 78-98; that stretch reads TGMAIELTYIALFLAFSLGAV. Residues 99 to 101 lie on the Cytoplasmic side of the membrane; it reads RRR. The helical transmembrane segment at 102–122 threads the bilayer; that stretch reads VLLLLAAEVAFVAAVAALVLN. The Extracellular segment spans residues 123–131; sequence LAHTHERRS. Residues 132–152 form a helical membrane-spanning segment; the sequence is MIVGILCVLFGTGMYAAPLSV. A MtN3/slv 2 domain is found at 133–217; that stretch reads IVGILCVLFG…ILYAIYYKST (85 aa). The Cytoplasmic segment spans residues 153–165; the sequence is MKMVIQTKSVEYM. Residues 166–186 form a helical membrane-spanning segment; the sequence is PLFLSLASLVNGICWTAYALI. Topologically, residues 187-191 are extracellular; the sequence is RFDLY. The chain crosses the membrane as a helical span at residues 192–212; that stretch reads ITIPNGLGVMFAVAQLILYAI. The Cytoplasmic portion of the chain corresponds to 213 to 259; sequence YYKSTQQIIEARKRKEADHVAMTDVVVDSAKNNPSSGAAAAAANGRY.

This sequence belongs to the SWEET sugar transporter family. Forms homooligomers and/or heterooligomers.

Its subcellular location is the cell membrane. In terms of biological role, mediates both low-affinity uptake and efflux of sugar across the plasma membrane. In Oryza sativa subsp. indica (Rice), this protein is Bidirectional sugar transporter SWEET4 (SWEET4).